A 211-amino-acid chain; its full sequence is SsrA-binding protein (211 aa).

Disordered stretches follow at residues Met-1 to Ser-20 and Arg-170 to Asn-211. Over residues Gln-177–Arg-187 the composition is skewed to polar residues.

It belongs to the SmpB family.

The protein resides in the cytoplasm. Its function is as follows. Required for rescue of stalled ribosomes mediated by trans-translation. Binds to transfer-messenger RNA (tmRNA), required for stable association of tmRNA with ribosomes. tmRNA and SmpB together mimic tRNA shape, replacing the anticodon stem-loop with SmpB. tmRNA is encoded by the ssrA gene; the 2 termini fold to resemble tRNA(Ala) and it encodes a 'tag peptide', a short internal open reading frame. During trans-translation Ala-aminoacylated tmRNA acts like a tRNA, entering the A-site of stalled ribosomes, displacing the stalled mRNA. The ribosome then switches to translate the ORF on the tmRNA; the nascent peptide is terminated with the 'tag peptide' encoded by the tmRNA and targeted for degradation. The ribosome is freed to recommence translation, which seems to be the essential function of trans-translation. The chain is SsrA-binding protein from Tropheryma whipplei (strain TW08/27) (Whipple's bacillus).